The sequence spans 352 residues: Phosphoribosylformylglycinamidine cyclo-ligase (352 aa).

Belongs to the AIR synthase family.

Its subcellular location is the cytoplasm. The enzyme catalyses 2-formamido-N(1)-(5-O-phospho-beta-D-ribosyl)acetamidine + ATP = 5-amino-1-(5-phospho-beta-D-ribosyl)imidazole + ADP + phosphate + H(+). It functions in the pathway purine metabolism; IMP biosynthesis via de novo pathway; 5-amino-1-(5-phospho-D-ribosyl)imidazole from N(2)-formyl-N(1)-(5-phospho-D-ribosyl)glycinamide: step 2/2. This Coxiella burnetii (strain RSA 331 / Henzerling II) protein is Phosphoribosylformylglycinamidine cyclo-ligase.